We begin with the raw amino-acid sequence, 414 residues long: Nucleoredoxin (414 aa).

In terms of domain architecture, Thioredoxin spans 131–305 (LLVKDDPEGL…ELNAVQLNEG (175 aa)).

Belongs to the nucleoredoxin family.

Its subcellular location is the cytoplasm. The protein localises to the cytosol. The protein resides in the nucleus. The enzyme catalyses [protein]-dithiol + NAD(+) = [protein]-disulfide + NADH + H(+). It catalyses the reaction [protein]-dithiol + NADP(+) = [protein]-disulfide + NADPH + H(+). Functions as a redox-dependent negative regulator of the Wnt signaling pathway. This is Nucleoredoxin (nxn) from Xenopus laevis (African clawed frog).